The chain runs to 259 residues: Methanethiol S-methyltransferase 2 (259 aa).

Transmembrane regions (helical) follow at residues 5-25 (LAIL…FLYA), 46-66 (LGEA…QHSV), 88-108 (TYVL…RPIP), 115-135 (SGIA…IAFA), and 182-202 (FLLA…FALA).

This sequence belongs to the nurim family.

It localises to the membrane. It carries out the reaction methanethiol + S-adenosyl-L-methionine = dimethyl sulfide + S-adenosyl-L-homocysteine + H(+). In terms of biological role, catalyzes the methylation of methanethiol (MeSH) to yield dimethylsulphide (DMS). The polypeptide is Methanethiol S-methyltransferase 2 (Bradyrhizobium diazoefficiens (strain JCM 10833 / BCRC 13528 / IAM 13628 / NBRC 14792 / USDA 110)).